The chain runs to 202 residues: Ribosome maturation factor RimP (202 aa).

Belongs to the RimP family.

Its subcellular location is the cytoplasm. Its function is as follows. Required for maturation of 30S ribosomal subunits. The chain is Ribosome maturation factor RimP from Paracidovorax citrulli (strain AAC00-1) (Acidovorax citrulli).